The primary structure comprises 585 residues: Acetolactate synthase large subunit (585 aa).

Thiamine diphosphate is bound at residue E60. Residues R162, 272-293, and 315-334 each bind FAD; these read HGTA…LGAR and DIDP…IISD. A thiamine pyrophosphate binding region spans residues 407–486; the sequence is QHQMWAAQFL…IKIFIINNQW (80 aa). The Mg(2+) site is built by D457 and N484.

Belongs to the TPP enzyme family. Dimer of large and small chains. The cofactor is Mg(2+). It depends on thiamine diphosphate as a cofactor.

The protein resides in the plastid. Its subcellular location is the chloroplast. The enzyme catalyses 2 pyruvate + H(+) = (2S)-2-acetolactate + CO2. The protein operates within amino-acid biosynthesis; L-isoleucine biosynthesis; L-isoleucine from 2-oxobutanoate: step 1/4. Its pathway is amino-acid biosynthesis; L-valine biosynthesis; L-valine from pyruvate: step 1/4. In Cyanidium caldarium (Red alga), this protein is Acetolactate synthase large subunit (ilvB).